Consider the following 99-residue polypeptide: MNTPAARPDRYQSFAHIPCDAMALKLLTHLEQLLQAEDTLEPFWQLFLQKAAIAKQPQPGQADALKLICSNSYYIFDLFAAQQDQAGEAMMDELEYQCC.

It belongs to the CowN family.

Is required to sustain N(2)-dependent growth in the presence of low levels of carbon monoxide (CO). Probably acts by protecting the N(2) fixation ability of the nitrogenase complex, which is inactivated in the presence of CO. The polypeptide is N(2)-fixation sustaining protein CowN (Magnetococcus marinus (strain ATCC BAA-1437 / JCM 17883 / MC-1)).